We begin with the raw amino-acid sequence, 256 residues long: Thiazole synthase (256 aa).

The active-site Schiff-base intermediate with DXP is the Lys95. Residues Gly156, 182-183, and 204-205 contribute to the 1-deoxy-D-xylulose 5-phosphate site; these read AG and NT.

It belongs to the ThiG family. In terms of assembly, homotetramer. Forms heterodimers with either ThiH or ThiS.

It localises to the cytoplasm. It carries out the reaction [ThiS sulfur-carrier protein]-C-terminal-Gly-aminoethanethioate + 2-iminoacetate + 1-deoxy-D-xylulose 5-phosphate = [ThiS sulfur-carrier protein]-C-terminal Gly-Gly + 2-[(2R,5Z)-2-carboxy-4-methylthiazol-5(2H)-ylidene]ethyl phosphate + 2 H2O + H(+). Its pathway is cofactor biosynthesis; thiamine diphosphate biosynthesis. Functionally, catalyzes the rearrangement of 1-deoxy-D-xylulose 5-phosphate (DXP) to produce the thiazole phosphate moiety of thiamine. Sulfur is provided by the thiocarboxylate moiety of the carrier protein ThiS. In vitro, sulfur can be provided by H(2)S. The sequence is that of Thiazole synthase from Escherichia coli (strain 55989 / EAEC).